An 861-amino-acid polypeptide reads, in one-letter code: DNA mismatch repair protein MutS (861 aa).

Residue 613-620 (GPNMGGKS) participates in ATP binding.

The protein belongs to the DNA mismatch repair MutS family.

In terms of biological role, this protein is involved in the repair of mismatches in DNA. It is possible that it carries out the mismatch recognition step. This protein has a weak ATPase activity. The sequence is that of DNA mismatch repair protein MutS from Dichelobacter nodosus (strain VCS1703A).